Consider the following 932-residue polypeptide: MAAPQSRPRRGELILLCALLGTLWEIGRGQIRYSVPEETDKGSFVGNISKDLGLDPRKLAKHGVRIVSRGRTQLFALNPRSGSLITAGRIDREELCAQSPRCLININTLVEDKGKLFGVEIEIIDINDNNPKFQVEDLEVKINEIAVPGARYPLPEAVDPDVGVNSLQSYQLSPNHHFSLDVQTGDNGAINPELVLERALDREEEAAHHLVLTASDGGKPPRSSTVRIHVTVLDTNDNAPVFPHPIYRVKVLENMPPGTRLLTVTASDPDEGINGKVAYKFRKINEKQTPLFQLNENTGEISIAKSLDYEECSFYEMEIQAEDVGALLGRTKLLISVEDVNDNRPEVIITSLFSPVLENSLPGTVIAFLSVHDQDSGKNGQVVCYTRDNLPFKLEKSIGNYYRLVTRKYLDRENVSIYNITVMASDLGTPPLSTETQIALHVADINDNPPTFPHASYSAYILENNLRGASIFSLTAHDPDSQENAQVTYSVTEDTLQGAPLSSYISINSDTGVLYALQSFDYEQIRDLQLLVTASDSGDPPLSSNMSLSLFVLDQNDNAPEILYPALPTDGSTGVELAPRSAERGYLVTKVVAVDRDSGQNAWLSYRLLKASEPGLFSVGLHTGEVRTARALLDRDALKQSLVVAVQDHGQPPLSATVTLTVAVADSIPEVLTELGSLKPSVDPNDSSLTLYLVVAVAAISCVFLAFVAVLLGLRLRRWHKSRLLQDSGGRLVGVPASHFVGVEEVQAFLQTYSQEVSLTADSRKSHLIFPQPNYADMLISQEGCEKNDSLLTSVDFHEYKNEADHGQQAPPNTDWRFSQAQRPGTSGSQNGDDTGTWPNNQFDTEMLQAMILASASEAADGSSTLGGGAGTMGLSARYGPQFTLQHVPDYRQNVYIPGSNATLTNAAGKRDGKAPAGGNGNKKKSGKKEKK.

Positions 1–29 (MAAPQSRPRRGELILLCALLGTLWEIGRG) are cleaved as a signal peptide. 6 Cadherin domains span residues 30–133 (QIRY…NPKF), 134–242 (QVED…APVF), 243–347 (PHPI…RPEV), 348–452 (IITS…PPTF), 453–562 (PHAS…APEI), and 570–682 (DGST…KPSV). Residues 30–692 (QIRYSVPEET…DPNDSSLTLY (663 aa)) are Extracellular-facing. Residue N47 is glycosylated (N-linked (GlcNAc...) asparagine). N414, N419, and N545 each carry an N-linked (GlcNAc...) asparagine glycan. N685 is a glycosylation site (N-linked (GlcNAc...) asparagine). The chain crosses the membrane as a helical span at residues 693 to 713 (LVVAVAAISCVFLAFVAVLLG). At 714–932 (LRLRRWHKSR…KKKSGKKEKK (219 aa)) the chain is on the cytoplasmic side. Disordered stretches follow at residues 804–841 (ADHG…WPNN) and 902–932 (ATLT…KEKK). A compositionally biased stretch (polar residues) spans 810–841 (APPNTDWRFSQAQRPGTSGSQNGDDTGTWPNN). The span at 922–932 (NKKKSGKKEKK) shows a compositional bias: basic residues.

The protein localises to the cell membrane. Potential calcium-dependent cell-adhesion protein. May be involved in the establishment and maintenance of specific neuronal connections in the brain. This chain is Protocadherin gamma-A8 (PCDHGA8), found in Homo sapiens (Human).